Reading from the N-terminus, the 715-residue chain is Myosin light chain kinase 3 (715 aa).

The segment at 67-114 is disordered; it reads VTLPNDPSSQHSPEAHTGASEPLKPVSAGESSKALQKAKEISVKSSEP. In terms of domain architecture, Protein kinase spans 404–659; the sequence is VNPVEVLGGG…ASGCMKHSWL (256 aa). ATP is bound by residues 410–418 and K433; that span reads LGGGRFGQV. D525 serves as the catalytic Proton acceptor.

This sequence belongs to the protein kinase superfamily. CAMK Ser/Thr protein kinase family. Mg(2+) serves as cofactor. Phosphorylated on serine residues.

It is found in the cytoplasm. It catalyses the reaction L-seryl-[myosin light chain] + ATP = O-phospho-L-seryl-[myosin light chain] + ADP + H(+). The enzyme catalyses L-threonyl-[myosin light chain] + ATP = O-phospho-L-threonyl-[myosin light chain] + ADP + H(+). Its function is as follows. Kinase that phosphorylates MYL2 in vitro. Increases cardiomyocyte contractility. Required for sarcomere formation in the developing heart. The protein is Myosin light chain kinase 3 (mylk3) of Danio rerio (Zebrafish).